A 210-amino-acid chain; its full sequence is Orotate phosphoribosyltransferase (210 aa).

Residues arginine 97, lysine 98, and 125-133 (NDMVSSGKS) each bind 5-phospho-alpha-D-ribose 1-diphosphate. Orotate contacts are provided by serine 129 and arginine 157.

It belongs to the purine/pyrimidine phosphoribosyltransferase family. PyrE subfamily. In terms of assembly, homodimer. Mg(2+) is required as a cofactor.

It carries out the reaction orotidine 5'-phosphate + diphosphate = orotate + 5-phospho-alpha-D-ribose 1-diphosphate. It functions in the pathway pyrimidine metabolism; UMP biosynthesis via de novo pathway; UMP from orotate: step 1/2. Its function is as follows. Catalyzes the transfer of a ribosyl phosphate group from 5-phosphoribose 1-diphosphate to orotate, leading to the formation of orotidine monophosphate (OMP). This chain is Orotate phosphoribosyltransferase, found in Chlamydia pneumoniae (Chlamydophila pneumoniae).